A 216-amino-acid polypeptide reads, in one-letter code: Coiled-coil domain-containing protein 124 (216 aa).

2 disordered regions span residues 1-93 and 194-216; these read MPKK…PSKV and LKKE…YNTK. The span at 18-90 shows a compositional bias: basic and acidic residues; sequence RKAEAKAVAD…IKGKQTKEGP (73 aa). Positions 18–119 form a coiled coil; it reads RKAEAKAVAD…EIKEKEKSHL (102 aa). Over residues 201–216 the composition is skewed to polar residues; the sequence is SPENPLNQRAASYNTK.

The protein belongs to the CCDC124 family. In terms of assembly, associates with translationally inactive ribosomes in the nonrotated state.

The protein resides in the cytoplasm. It is found in the cytoskeleton. Its subcellular location is the microtubule organizing center. The protein localises to the centrosome. It localises to the midbody. Its function is as follows. Ribosome-binding protein involved in ribosome hibernation: associates with translationally inactive ribosomes and stabilizes the nonrotated conformation of the 80S ribosome, thereby promoting ribosome preservation and storage. The chain is Coiled-coil domain-containing protein 124 (ccdc124) from Danio rerio (Zebrafish).